The sequence spans 864 residues: Translation initiation factor IF-2 (864 aa).

The tract at residues methionine 1 to serine 252 is disordered. Residues lysine 78–aspartate 90 are compositionally biased toward basic and acidic residues. Polar residues predominate over residues valine 106–proline 120. The segment covering arginine 150 to glycine 212 has biased composition (gly residues). Positions histidine 239–serine 252 are enriched in basic and acidic residues. The tr-type G domain maps to asparagine 359–lysine 528. The segment at glycine 368–threonine 375 is G1. Residue glycine 368–threonine 375 participates in GTP binding. Positions glycine 393–histidine 397 are G2. A G3 region spans residues aspartate 414–glycine 417. Residues aspartate 414 to histidine 418 and asparagine 468 to aspartate 471 each bind GTP. Residues asparagine 468 to aspartate 471 form a G4 region. A G5 region spans residues serine 504–arginine 506.

It belongs to the TRAFAC class translation factor GTPase superfamily. Classic translation factor GTPase family. IF-2 subfamily.

The protein localises to the cytoplasm. Functionally, one of the essential components for the initiation of protein synthesis. Protects formylmethionyl-tRNA from spontaneous hydrolysis and promotes its binding to the 30S ribosomal subunits. Also involved in the hydrolysis of GTP during the formation of the 70S ribosomal complex. The chain is Translation initiation factor IF-2 from Leptospira borgpetersenii serovar Hardjo-bovis (strain L550).